We begin with the raw amino-acid sequence, 176 residues long: ATP synthase subunit b (176 aa).

Residues 27-47 traverse the membrane as a helical segment; sequence FFVFSFLTLILVVTIVTLLVY.

The protein belongs to the ATPase B chain family. In terms of assembly, F-type ATPases have 2 components, F(1) - the catalytic core - and F(0) - the membrane proton channel. F(1) has five subunits: alpha(3), beta(3), gamma(1), delta(1), epsilon(1). F(0) has three main subunits: a(1), b(2) and c(10-14). The alpha and beta chains form an alternating ring which encloses part of the gamma chain. F(1) is attached to F(0) by a central stalk formed by the gamma and epsilon chains, while a peripheral stalk is formed by the delta and b chains.

It localises to the cell membrane. Functionally, f(1)F(0) ATP synthase produces ATP from ADP in the presence of a proton or sodium gradient. F-type ATPases consist of two structural domains, F(1) containing the extramembraneous catalytic core and F(0) containing the membrane proton channel, linked together by a central stalk and a peripheral stalk. During catalysis, ATP synthesis in the catalytic domain of F(1) is coupled via a rotary mechanism of the central stalk subunits to proton translocation. In terms of biological role, component of the F(0) channel, it forms part of the peripheral stalk, linking F(1) to F(0). This Metamycoplasma arthritidis (strain 158L3-1) (Mycoplasma arthritidis) protein is ATP synthase subunit b.